The sequence spans 158 residues: Probable cyclic pyranopterin monophosphate synthase (158 aa).

Substrate is bound by residues 75–77 and 111–112; these read MCH and ME. D126 is an active-site residue.

It belongs to the MoaC family. In terms of assembly, homohexamer; trimer of dimers.

The enzyme catalyses (8S)-3',8-cyclo-7,8-dihydroguanosine 5'-triphosphate = cyclic pyranopterin phosphate + diphosphate. It participates in cofactor biosynthesis; molybdopterin biosynthesis. Functionally, catalyzes the conversion of (8S)-3',8-cyclo-7,8-dihydroguanosine 5'-triphosphate to cyclic pyranopterin monophosphate (cPMP). This chain is Probable cyclic pyranopterin monophosphate synthase, found in Methanocorpusculum labreanum (strain ATCC 43576 / DSM 4855 / Z).